Here is a 288-residue protein sequence, read N- to C-terminus: Polyketide biosynthesis malonyl CoA-acyl carrier protein transacylase PksC (288 aa).

Catalysis depends on residues Ser-87 and His-193.

Belongs to the FabD family.

Its subcellular location is the cytoplasm. The catalysed reaction is holo-[ACP] + malonyl-CoA = malonyl-[ACP] + CoA. It functions in the pathway antibiotic biosynthesis; bacillaene biosynthesis. Involved in some intermediate steps for the synthesis of the antibiotic polyketide bacillaene which is involved in secondary metabolism. It catalyzes the transfer of the malonyl-CoA group to the acyl-carrier-protein AcpK (Mal-AcpK). This is Polyketide biosynthesis malonyl CoA-acyl carrier protein transacylase PksC (pksC) from Bacillus subtilis (strain 168).